The sequence spans 315 residues: MTTYDPSQKSLGKEKLSRIPVKIEATHTPLRKPDWIRIRLSTDSKVSQLKKLLRENHLVTVCEEASCPNLNECFGHGTATFMIMGDKCTRRCSFCDVGHGRPDPLDPEEPVNLANTVSIMSLRYVVITSVDRDDLRDGGAQHYAQCINAVREKNPGIKVEVLVPDFRGRMEKALDQLAQGLPDVFNHNIETAPRLYKQARPGADYPWSLALLQTFKKRFPGIPTKSGMMLGLGETREEVEMVMRDLRQHEVDRLTLGQYLQPTRYHMPVDRYVTPQEFQELGELAKKLGFSNVASGPLVRSSYHADLQAQGERVS.

7 residues coordinate [4Fe-4S] cluster: Cys-62, Cys-67, Cys-73, Cys-88, Cys-92, Cys-95, and Ser-302. The 219-residue stretch at 73 to 291 (CFGHGTATFM…GELAKKLGFS (219 aa)) folds into the Radical SAM core domain.

The protein belongs to the radical SAM superfamily. Lipoyl synthase family. It depends on [4Fe-4S] cluster as a cofactor.

It localises to the cytoplasm. It catalyses the reaction [[Fe-S] cluster scaffold protein carrying a second [4Fe-4S](2+) cluster] + N(6)-octanoyl-L-lysyl-[protein] + 2 oxidized [2Fe-2S]-[ferredoxin] + 2 S-adenosyl-L-methionine + 4 H(+) = [[Fe-S] cluster scaffold protein] + N(6)-[(R)-dihydrolipoyl]-L-lysyl-[protein] + 4 Fe(3+) + 2 hydrogen sulfide + 2 5'-deoxyadenosine + 2 L-methionine + 2 reduced [2Fe-2S]-[ferredoxin]. The protein operates within protein modification; protein lipoylation via endogenous pathway; protein N(6)-(lipoyl)lysine from octanoyl-[acyl-carrier-protein]: step 2/2. Its function is as follows. Catalyzes the radical-mediated insertion of two sulfur atoms into the C-6 and C-8 positions of the octanoyl moiety bound to the lipoyl domains of lipoate-dependent enzymes, thereby converting the octanoylated domains into lipoylated derivatives. This chain is Lipoyl synthase, found in Coxiella burnetii (strain CbuG_Q212) (Coxiella burnetii (strain Q212)).